A 435-amino-acid chain; its full sequence is ATP-dependent protease ATPase subunit HslU (435 aa).

Residues Ile18, 60 to 65 (GVGKTE), Asp248, Glu313, and Arg385 contribute to the ATP site.

It belongs to the ClpX chaperone family. HslU subfamily. As to quaternary structure, a double ring-shaped homohexamer of HslV is capped on each side by a ring-shaped HslU homohexamer. The assembly of the HslU/HslV complex is dependent on binding of ATP.

It localises to the cytoplasm. Functionally, ATPase subunit of a proteasome-like degradation complex; this subunit has chaperone activity. The binding of ATP and its subsequent hydrolysis by HslU are essential for unfolding of protein substrates subsequently hydrolyzed by HslV. HslU recognizes the N-terminal part of its protein substrates and unfolds these before they are guided to HslV for hydrolysis. In Ruegeria pomeroyi (strain ATCC 700808 / DSM 15171 / DSS-3) (Silicibacter pomeroyi), this protein is ATP-dependent protease ATPase subunit HslU.